A 153-amino-acid chain; its full sequence is Type II secretion system core protein G (153 aa).

A propeptide spans 1–7 (MERRQRG) (leader sequence). Phe-8 is subject to N-methylphenylalanine. The chain crosses the membrane as a helical span at residues 8 to 28 (FTLLEIMVVIVILGVLASLVV). Disordered stretches follow at residues 68–91 (EQGLGALVKKPTTPPEPRNYPQDG) and 126–153 (MPDTDDDIGNWNVGNGAHNNGGNGNGNP). Residues 134 to 143 (GNWNVGNGAH) show a composition bias toward low complexity. A compositionally biased stretch (gly residues) spans 144-153 (NNGGNGNGNP).

This sequence belongs to the GSP G family. In terms of assembly, type II secretion system is composed of four main components: the outer membrane complex, the inner membrane complex, the cytoplasmic secretion ATPase and the periplasm-spanning pseudopilus. Forms homomultimers. Cleaved by the prepilin peptidase. In terms of processing, methylated by prepilin peptidase at the amino group of the N-terminal phenylalanine once the leader sequence is cleaved.

Its subcellular location is the cell inner membrane. Its function is as follows. Core component of the type II secretion system required for the energy-dependent secretion of extracellular factors such as proteases and toxins from the periplasm. Pseudopilin (pilin-like) protein that polymerizes to form the pseudopilus. Further polymerization triggers pseudopilus growth. The protein is Type II secretion system core protein G (outG) of Dickeya chrysanthemi (Pectobacterium chrysanthemi).